Here is a 536-residue protein sequence, read N- to C-terminus: Probable cytochrome P450 12a5, mitochondrial (536 aa).

Residue Cys-482 coordinates heme.

This sequence belongs to the cytochrome P450 family. Heme serves as cofactor.

Its subcellular location is the mitochondrion membrane. This is Probable cytochrome P450 12a5, mitochondrial (Cyp12a5) from Drosophila melanogaster (Fruit fly).